We begin with the raw amino-acid sequence, 498 residues long: Glycerol kinase 1 (498 aa).

Position 12 (threonine 12) interacts with ADP. The ATP site is built by threonine 12, threonine 13, and serine 14. Threonine 12 provides a ligand contact to sn-glycerol 3-phosphate. Arginine 16 is an ADP binding site. Positions 82, 83, 134, and 243 each coordinate sn-glycerol 3-phosphate. Residues arginine 82, glutamate 83, tyrosine 134, aspartate 243, and glutamine 244 each contribute to the glycerol site. Residues threonine 265 and glycine 308 each coordinate ADP. Residues threonine 265, glycine 308, glutamine 312, and glycine 409 each coordinate ATP. 2 residues coordinate ADP: glycine 409 and asparagine 413.

This sequence belongs to the FGGY kinase family. Homotetramer and homodimer (in equilibrium).

The enzyme catalyses glycerol + ATP = sn-glycerol 3-phosphate + ADP + H(+). Its pathway is polyol metabolism; glycerol degradation via glycerol kinase pathway; sn-glycerol 3-phosphate from glycerol: step 1/1. Its activity is regulated as follows. Activated by phosphorylation and inhibited by fructose 1,6-bisphosphate (FBP). Functionally, key enzyme in the regulation of glycerol uptake and metabolism. Catalyzes the phosphorylation of glycerol to yield sn-glycerol 3-phosphate. The sequence is that of Glycerol kinase 1 from Clostridium tetani (strain Massachusetts / E88).